The following is a 230-amino-acid chain: Large ribosomal subunit protein uL1 (230 aa).

This sequence belongs to the universal ribosomal protein uL1 family. In terms of assembly, part of the 50S ribosomal subunit.

Binds directly to 23S rRNA. The L1 stalk is quite mobile in the ribosome, and is involved in E site tRNA release. Its function is as follows. Protein L1 is also a translational repressor protein, it controls the translation of the L11 operon by binding to its mRNA. The protein is Large ribosomal subunit protein uL1 of Ligilactobacillus salivarius (strain UCC118) (Lactobacillus salivarius).